Consider the following 145-residue polypeptide: Basic phospholipase A2 GL1-1 (145 aa).

Positions 1–21 are cleaved as a signal peptide; it reads MYPAHLLVLLAVCVSLLGASA. Residues 22 to 27 constitute a propeptide that is removed on maturation; the sequence is IPPLPL. Cystine bridges form between Cys-38–Cys-98, Cys-54–Cys-144, Cys-56–Cys-72, Cys-71–Cys-125, Cys-78–Cys-118, Cys-87–Cys-111, and Cys-105–Cys-116. Ca(2+)-binding residues include Tyr-55, Gly-57, and Gly-59. His-75 is a catalytic residue. Asp-76 is a binding site for Ca(2+). Residue Asp-119 is part of the active site.

The protein belongs to the phospholipase A2 family. Group I subfamily. D49 sub-subfamily. The cofactor is Ca(2+). Expressed by the venom gland.

Its subcellular location is the secreted. It catalyses the reaction a 1,2-diacyl-sn-glycero-3-phosphocholine + H2O = a 1-acyl-sn-glycero-3-phosphocholine + a fatty acid + H(+). PLA2 catalyzes the calcium-dependent hydrolysis of the 2-acyl groups in 3-sn-phosphoglycerides. This Laticauda semifasciata (Black-banded sea krait) protein is Basic phospholipase A2 GL1-1.